The following is a 418-amino-acid chain: Ras association domain-containing protein 5 (418 aa).

Residues 1 to 118 form a disordered region; it reads MAMASPAIGQ…QPQDPRVPAE (118 aa). A2 carries the N-acetylthreonine modification. Residues 77–89 show a composition bias toward low complexity; the sequence is SRPARPLRPGLQQ. Residues 122-170 form a Phorbol-ester/DAG-type zinc finger; it reads GHCFAELVLPGGPGWCDLCGREVLRQALRCTNCKFTCHPECRSLIQLDC. Residues S182 and S279 each carry the phosphoserine modification. In terms of domain architecture, Ras-associating spans 274-364; that stretch reads TDKRTSFYLP…LSFVLKENET (91 aa). T352 is subject to Phosphothreonine. The SARAH domain occupies 366–413; it reads EVEWDAFSIPELQNFLTILEKEEQDKIQQVQKKYDKFRQKLEEALRES.

In terms of assembly, interacts directly with activated HRAS; a RASSF5-STK4/MST1 complex probably associates with activated HRAS. Interacts with KRAS. Probably interacts with Ras-like GTPases RRAS, MRAS, RAP1B, RAP2A and RALA. Interacts with RRAS2. Can self-associate. Interacts with RSSF1 isoform A. The RSSF1 isoform A-RSSF5 heterodimer probably mediates the association of RSSF1 with HRAS. Isoform 2 interacts with activated RAP1A and ITGAL/LFA-1. Binds STK4/MST1, inhibiting STK4/MST1 autoactivation. As to expression, widely expressed. Frequently down-regulated in lung tumor cell lines and primary lung tumors.

It is found in the cytoplasm. Its subcellular location is the cytoskeleton. Potential tumor suppressor. Seems to be involved in lymphocyte adhesion by linking RAP1A activation upon T-cell receptor or chemokine stimulation to integrin activation. Isoform 2 stimulates lymphocyte polarization and the patch-like distribution of ITGAL/LFA-1, resulting in an enhanced adhesion to ICAM1. Together with RAP1A may participate in regulation of microtubule growth. The association of isoform 2 with activated RAP1A is required for directional movement of endothelial cells during wound healing. May be involved in regulation of Ras apoptotic function. The RASSF5-STK4/MST1 complex may mediate HRAS and KRAS induced apoptosis. The protein is Ras association domain-containing protein 5 (RASSF5) of Homo sapiens (Human).